The primary structure comprises 342 residues: UDP-xylose transporter 1 (342 aa).

Helical transmembrane passes span 7–27 (MQMG…SIVI), 36–56 (LGFP…YCTL), 75–95 (VVLF…SLGF), 100–120 (FYQM…TLFL), 132–152 (LFLL…LNFV), 154–174 (SVLS…TNTI), 184–204 (QLLY…GPFV), 221–241 (IVVG…FSTF), 250–270 (VTYQ…GYTL), and 280–300 (IAGI…CSVA). The interval 305-342 (QASSDSTFLGKDRDTTPLLGQENENHHEAKKLDKHSPV) is disordered. The span at 327–342 (NENHHEAKKLDKHSPV) shows a compositional bias: basic and acidic residues.

It belongs to the TPT transporter family. TPT (TC 2.A.7.9) subfamily. As to expression, ubiquitous.

The protein resides in the golgi apparatus membrane. Its subcellular location is the endoplasmic reticulum membrane. Its function is as follows. Nucleotide-sugar transporter that transports UDP-xylose and UMP in a strict counter-exchange mode. This is UDP-xylose transporter 1 from Arabidopsis thaliana (Mouse-ear cress).